A 189-amino-acid polypeptide reads, in one-letter code: Peptidyl-tRNA hydrolase (189 aa).

TRNA is bound at residue Y18. H23 (proton acceptor) is an active-site residue. The tRNA site is built by F67, N69, and N115.

It belongs to the PTH family. Monomer.

It localises to the cytoplasm. The enzyme catalyses an N-acyl-L-alpha-aminoacyl-tRNA + H2O = an N-acyl-L-amino acid + a tRNA + H(+). Functionally, hydrolyzes ribosome-free peptidyl-tRNAs (with 1 or more amino acids incorporated), which drop off the ribosome during protein synthesis, or as a result of ribosome stalling. Its function is as follows. Catalyzes the release of premature peptidyl moieties from peptidyl-tRNA molecules trapped in stalled 50S ribosomal subunits, and thus maintains levels of free tRNAs and 50S ribosomes. The protein is Peptidyl-tRNA hydrolase of Leptospira borgpetersenii serovar Hardjo-bovis (strain JB197).